The sequence spans 342 residues: Ribosomal RNA small subunit methyltransferase C (342 aa).

This sequence belongs to the methyltransferase superfamily. RsmC family. In terms of assembly, monomer.

It is found in the cytoplasm. The catalysed reaction is guanosine(1207) in 16S rRNA + S-adenosyl-L-methionine = N(2)-methylguanosine(1207) in 16S rRNA + S-adenosyl-L-homocysteine + H(+). In terms of biological role, specifically methylates the guanine in position 1207 of 16S rRNA in the 30S particle. The protein is Ribosomal RNA small subunit methyltransferase C of Salmonella paratyphi A (strain ATCC 9150 / SARB42).